The sequence spans 156 residues: Small ribosomal subunit protein uS7 (156 aa).

This sequence belongs to the universal ribosomal protein uS7 family. Part of the 30S ribosomal subunit. Contacts proteins S9 and S11.

One of the primary rRNA binding proteins, it binds directly to 16S rRNA where it nucleates assembly of the head domain of the 30S subunit. Is located at the subunit interface close to the decoding center, probably blocks exit of the E-site tRNA. The chain is Small ribosomal subunit protein uS7 from Pectobacterium carotovorum subsp. carotovorum (strain PC1).